We begin with the raw amino-acid sequence, 520 residues long: Beta-glucosidase 45 (520 aa).

Residues 1-22 (MKNLTSFVIVILLQSLLFHVYG) form the signal peptide. N3 is a glycosylation site (N-linked (GlcNAc...) asparagine). A beta-D-glucoside contacts are provided by residues Q52, H155, and 200-201 (NE). The active-site Proton donor is E201. C220 and C227 are joined by a disulfide. N226 is a glycosylation site (N-linked (GlcNAc...) asparagine). Residue Y344 participates in a beta-D-glucoside binding. A disulfide bridge links C352 with C357. Residue N378 is glycosylated (N-linked (GlcNAc...) asparagine). Residue E417 participates in a beta-D-glucoside binding. E417 (nucleophile) is an active-site residue. N435 is a glycosylation site (N-linked (GlcNAc...) asparagine). A beta-D-glucoside-binding positions include W466, 473-474 (EW), and F482.

Belongs to the glycosyl hydrolase 1 family. As to expression, expressed in stems and siliques.

The catalysed reaction is Hydrolysis of terminal, non-reducing beta-D-glucosyl residues with release of beta-D-glucose.. Hydrolyzes p-nitrophenyl beta-D-glucoside and natural glucosides such as syringin, coniferin and p-coumaryl alcohol glucoside. May be involved in lignification by hydrolyzing monolignol glucosides. This chain is Beta-glucosidase 45, found in Arabidopsis thaliana (Mouse-ear cress).